The primary structure comprises 362 residues: Exopolygalacturonase (362 aa).

4 PbH1 repeats span residues 138–164 (CKNL…HIGR), 165–186 (SDGV…SLGD), 188–208 (SKNI…SVGS), and 218–239 (VVGI…RIKT). N-linked (GlcNAc...) asparagine glycosylation occurs at asparagine 140. Catalysis depends on aspartate 179, which acts as the Proton donor. Asparagine 192 and asparagine 195 each carry an N-linked (GlcNAc...) asparagine glycan. The active site involves histidine 202. N-linked (GlcNAc...) asparagine glycosylation is present at asparagine 225.

This sequence belongs to the glycosyl hydrolase 28 family. Pollen tubes growing through the style during pollination.

Its subcellular location is the secreted. The protein localises to the cell wall. It catalyses the reaction [(1-&gt;4)-alpha-D-galacturonosyl](n) + H2O = alpha-D-galacturonate + [(1-&gt;4)-alpha-D-galacturonosyl](n-1). In terms of biological role, may function in depolymerizing pectin during pollen development, germination, and tube growth. Acts as an exo-polygalacturonase. This is Exopolygalacturonase from Oenothera organensis (Evening primrose).